A 304-amino-acid chain; its full sequence is Ribosomal protein L11 methyltransferase (304 aa).

S-adenosyl-L-methionine is bound by residues threonine 156, glycine 177, aspartate 199, and asparagine 240.

It belongs to the methyltransferase superfamily. PrmA family.

It is found in the cytoplasm. It carries out the reaction L-lysyl-[protein] + 3 S-adenosyl-L-methionine = N(6),N(6),N(6)-trimethyl-L-lysyl-[protein] + 3 S-adenosyl-L-homocysteine + 3 H(+). Its function is as follows. Methylates ribosomal protein L11. In Symbiobacterium thermophilum (strain DSM 24528 / JCM 14929 / IAM 14863 / T), this protein is Ribosomal protein L11 methyltransferase.